The sequence spans 78 residues: Acyl carrier protein (78 aa).

Residues 2 to 77 (STIEERVKKI…AAIDYILSHQ (76 aa)) form the Carrier domain. Residue Ser37 is modified to O-(pantetheine 4'-phosphoryl)serine.

The protein belongs to the acyl carrier protein (ACP) family. Post-translationally, 4'-phosphopantetheine is transferred from CoA to a specific serine of apo-ACP by AcpS. This modification is essential for activity because fatty acids are bound in thioester linkage to the sulfhydryl of the prosthetic group.

It localises to the cytoplasm. Its pathway is lipid metabolism; fatty acid biosynthesis. Functionally, carrier of the growing fatty acid chain in fatty acid biosynthesis. The sequence is that of Acyl carrier protein from Tolumonas auensis (strain DSM 9187 / NBRC 110442 / TA 4).